A 297-amino-acid chain; its full sequence is 4-hydroxy-tetrahydrodipicolinate synthase (297 aa).

Threonine 46 lines the pyruvate pocket. The active-site Proton donor/acceptor is the tyrosine 136. The active-site Schiff-base intermediate with substrate is the lysine 165. Threonine 206 is a binding site for pyruvate.

Belongs to the DapA family. Homotetramer; dimer of dimers.

It localises to the cytoplasm. It carries out the reaction L-aspartate 4-semialdehyde + pyruvate = (2S,4S)-4-hydroxy-2,3,4,5-tetrahydrodipicolinate + H2O + H(+). Its pathway is amino-acid biosynthesis; L-lysine biosynthesis via DAP pathway; (S)-tetrahydrodipicolinate from L-aspartate: step 3/4. Its function is as follows. Catalyzes the condensation of (S)-aspartate-beta-semialdehyde [(S)-ASA] and pyruvate to 4-hydroxy-tetrahydrodipicolinate (HTPA). The polypeptide is 4-hydroxy-tetrahydrodipicolinate synthase (Sulfurimonas denitrificans (strain ATCC 33889 / DSM 1251) (Thiomicrospira denitrificans (strain ATCC 33889 / DSM 1251))).